Consider the following 137-residue polypeptide: Large-conductance mechanosensitive channel (137 aa).

Transmembrane regions (helical) follow at residues 9–29 (AFAVKGNVVDMAVGIIIGAAF) and 79–99 (IQSVLDFVIVAFAIFMGVKAI).

Belongs to the MscL family. As to quaternary structure, homopentamer.

It localises to the cell inner membrane. Channel that opens in response to stretch forces in the membrane lipid bilayer. May participate in the regulation of osmotic pressure changes within the cell. The protein is Large-conductance mechanosensitive channel of Pseudomonas fluorescens (strain Pf0-1).